A 474-amino-acid chain; its full sequence is Bifunctional protein HldE (474 aa).

The tract at residues 1 to 318 is ribokinase; that stretch reads MKLSMPRFDQ…RAVQREQGSE (318 aa). Residue 194–197 coordinates ATP; the sequence is NLSE. Asp-263 is a catalytic residue. The cytidylyltransferase stretch occupies residues 343–474; it reads FTNGCFDILH…AIVEKIRQKG (132 aa).

In the N-terminal section; belongs to the carbohydrate kinase PfkB family. It in the C-terminal section; belongs to the cytidylyltransferase family. Homodimer.

The enzyme catalyses D-glycero-beta-D-manno-heptose 7-phosphate + ATP = D-glycero-beta-D-manno-heptose 1,7-bisphosphate + ADP + H(+). It carries out the reaction D-glycero-beta-D-manno-heptose 1-phosphate + ATP + H(+) = ADP-D-glycero-beta-D-manno-heptose + diphosphate. Its pathway is nucleotide-sugar biosynthesis; ADP-L-glycero-beta-D-manno-heptose biosynthesis; ADP-L-glycero-beta-D-manno-heptose from D-glycero-beta-D-manno-heptose 7-phosphate: step 1/4. The protein operates within nucleotide-sugar biosynthesis; ADP-L-glycero-beta-D-manno-heptose biosynthesis; ADP-L-glycero-beta-D-manno-heptose from D-glycero-beta-D-manno-heptose 7-phosphate: step 3/4. Its function is as follows. Catalyzes the phosphorylation of D-glycero-D-manno-heptose 7-phosphate at the C-1 position to selectively form D-glycero-beta-D-manno-heptose-1,7-bisphosphate. Functionally, catalyzes the ADP transfer from ATP to D-glycero-beta-D-manno-heptose 1-phosphate, yielding ADP-D-glycero-beta-D-manno-heptose. In Pseudomonas paraeruginosa (strain DSM 24068 / PA7) (Pseudomonas aeruginosa (strain PA7)), this protein is Bifunctional protein HldE.